The chain runs to 126 residues: Small ribosomal subunit protein uS13 (126 aa).

Positions 94-126 (RGLPVHGQRTSTNARTRKGPRRAIAGKKKPGKK) are disordered. Over residues 108 to 126 (RTRKGPRRAIAGKKKPGKK) the composition is skewed to basic residues.

Belongs to the universal ribosomal protein uS13 family. Part of the 30S ribosomal subunit. Forms a loose heterodimer with protein S19. Forms two bridges to the 50S subunit in the 70S ribosome.

In terms of biological role, located at the top of the head of the 30S subunit, it contacts several helices of the 16S rRNA. In the 70S ribosome it contacts the 23S rRNA (bridge B1a) and protein L5 of the 50S subunit (bridge B1b), connecting the 2 subunits; these bridges are implicated in subunit movement. Contacts the tRNAs in the A and P-sites. This is Small ribosomal subunit protein uS13 from Streptomyces avermitilis (strain ATCC 31267 / DSM 46492 / JCM 5070 / NBRC 14893 / NCIMB 12804 / NRRL 8165 / MA-4680).